The sequence spans 326 residues: Adenosine receptor A1 (326 aa).

Over 1 to 10 (MPPSISAFQA) the chain is Extracellular. Residues 11 to 33 (AYIGIEVLIALVSVPGNVLVIWA) form a helical membrane-spanning segment. The Cytoplasmic segment spans residues 34 to 46 (VKVNQALRDATFC). Residues 47–69 (FIVSLAVADVAVGALVIPLAILI) form a helical membrane-spanning segment. Topologically, residues 70 to 80 (NIGPQTYFHTC) are extracellular. An intrachain disulfide couples Cys80 to Cys169. A helical transmembrane segment spans residues 81 to 102 (LMVACPVLILTQSSILALLAIA). The Cytoplasmic portion of the chain corresponds to 103 to 123 (VDRYLRVKIPLRYKMVVTPRR). Residues 124-146 (AAVAIAGCWILSFVVGLTPMFGW) form a helical membrane-spanning segment. Residues 147-176 (NNLSAVERAWAANGSMGEPVIKCEFEKVIS) lie on the Extracellular side of the membrane. Asn159 carries N-linked (GlcNAc...) asparagine glycosylation. Residues 177–201 (MEYMVYFNFFVWVLPPLLLMVLIYL) form a helical membrane-spanning segment. Residues 202–235 (EVFYLIRKQLNKKVSASSGDPQKYYGKELKIAKS) lie on the Cytoplasmic side of the membrane. The helical transmembrane segment at 236-259 (LALILFLFALSWLPLHILNCITLF) threads the bilayer. Residues 260 to 267 (CPSCHKPS) are Extracellular-facing. Residues 268–292 (ILTYIAIFLTHGNSAMNPIVYAFRI) traverse the membrane as a helical segment. Topologically, residues 293–326 (QKFRVTFLKIWNDHFRCQPAPPIDEDLPEERPDD) are cytoplasmic. Residue Cys309 is the site of S-palmitoyl cysteine attachment.

This sequence belongs to the G-protein coupled receptor 1 family.

The protein resides in the cell membrane. Receptor for adenosine. The activity of this receptor is mediated by G proteins which inhibit adenylyl cyclase. The polypeptide is Adenosine receptor A1 (ADORA1) (Homo sapiens (Human)).